A 233-amino-acid polypeptide reads, in one-letter code: MSQSNRELVVDFLSYKLSQKGYSWSQFTDVEENRTEAPEGTESEAETPSAINGNPSWHLADSPAVNGATGHSSSLDAREVIPMAAVKQALREAGDEFELRYRRAFSDLTSQLHITPGTAYQSFEQVLNELFRDGVNWGRIVAFFSFGGALCVESVDKEMQVLVSRIATWMATYLNDHLEPWIQENGGWDTFVELYGNNAAAESRKGQERFNRWFLTGMTLAGVVLLGSLFSRK.

A BH4 motif is present at residues 4-24; the sequence is SNRELVVDFLSYKLSQKGYSW. The disordered stretch occupies residues 29–71; that stretch reads DVEENRTEAPEGTESEAETPSAINGNPSWHLADSPAVNGATGH. Ser-49 carries the post-translational modification Phosphoserine; by PLK3. Ser-62 bears the Phosphoserine; by CDK1 mark. A BH3 motif is present at residues 86-100; it reads VKQALREAGDEFELR. The BH1 signature appears at 129 to 148; sequence ELFRDGVNWGRIVAFFSFGG. Residues 180-195 carry the BH2 motif; that stretch reads PWIQENGGWDTFVELY. A helical membrane pass occupies residues 210 to 226; it reads FNRWFLTGMTLAGVVLL.

Belongs to the Bcl-2 family. In terms of assembly, homodimer. Heterodimers with BAX, BAK or BCL2. Heterodimerization with BAX does not seem to be required for anti-apoptotic activity. Interacts with BCL2L11. Interacts with BAD. Interacts with SIVA1 isoform 1; the interaction inhibits the anti-apoptotic activity. Interacts with BECN1 and PGAM5. Interacts with IKZF3. Interacts with HEBP2. Interacts with BOP. Interacts with p53/TP53 and BBC3; interaction with BBC3 disrupts the interaction with p53/TP53. Interacts with DNM1L and CLTA; DNM1L and BCL2L1 may form a complex in synaptic vesicles that also contains clathrin and MFF. Interacts with ATP5F1A and ATP5F1B; the interactions mediate the association of BCL2L1 with the mitochondrial membrane ATP synthase F(1)F(0) ATP synthase. Interacts with VDAC1. Interacts (via the loop between motifs BH4 and BH3) with NLRP1 (via LRR repeats), but not with NLRP2, NLRP3, NLRP4, PYCARD, nor MEFV. Interacts with BCL2L11 (via BH3). Interacts with RNF183. Interacts with GIMAP3/IAN4. Interacts with GIMAP5 and HSPA8/HSC70; the interaction between HSPA8 and BCL2L1 is impaired in the absence of GIMAP5. Interacts with CLU (isoform 4); this interaction releases and activates BAX and promotes cell death. In terms of processing, proteolytically cleaved by caspases during apoptosis. The cleaved protein, lacking the BH4 motif, has pro-apoptotic activity. Phosphorylated on Ser-62 by CDK1. This phosphorylation is partial in normal mitotic cells, but complete in G2-arrested cells upon DNA-damage, thus promoting subsequent apoptosis probably by triggering caspases-mediated proteolysis. Phosphorylated by PLK3, leading to regulate the G2 checkpoint and progression to cytokinesis during mitosis. Phosphorylation at Ser-49 appears during the S phase and G2, disappears rapidly in early mitosis during prometaphase, metaphase and early anaphase, and re-appears during telophase and cytokinesis. Post-translationally, ubiquitinated by RNF183 during prolonged ER stress, leading to degradation by the proteosome.

The protein resides in the mitochondrion membrane. The protein localises to the nucleus membrane. It is found in the mitochondrion matrix. Its subcellular location is the cytoplasm. It localises to the cytoskeleton. The protein resides in the microtubule organizing center. The protein localises to the centrosome. It is found in the cytosol. Its subcellular location is the cytoplasmic vesicle. It localises to the secretory vesicle. The protein resides in the synaptic vesicle membrane. Potent inhibitor of cell death. Inhibits activation of caspases. Appears to regulate cell death by blocking the voltage-dependent anion channel (VDAC) by binding to it and preventing the release of the caspase activator, CYC1, from the mitochondrial membrane. Also acts as a regulator of G2 checkpoint and progression to cytokinesis during mitosis. Regulates presynaptic plasticity, including neurotransmitter release and recovery, number of axonal mitochondria as well as size and number of synaptic vesicle clusters. During synaptic stimulation, increases ATP availability from mitochondria through regulation of mitochondrial membrane ATP synthase F(1)F(0) activity and regulates endocytic vesicle retrieval in hippocampal neurons through association with DMN1L and stimulation of its GTPase activity in synaptic vesicles. May attenuate inflammation impairing NLRP1-inflammasome activation, hence CASP1 activation and IL1B release. The protein is Bcl-2-like protein 1 (BCL2L1) of Sus scrofa (Pig).